A 450-amino-acid chain; its full sequence is Interferon regulatory factor 4 (450 aa).

Positions 21 to 129 (NGKLRQWLID…DPYKVYRIVP (109 aa)) form a DNA-binding region, IRF tryptophan pentad repeat. Residues Ser446 and Ser447 each carry the phosphoserine; by ROCK2 modification.

The protein belongs to the IRF family. In terms of assembly, interacts with SPIB and DEF6. Interacts with the BATF-JUNB heterodimer. Interacts with BATF (via bZIP domain); the interaction is direct. Directly interacts with NLRP3 in the nucleus of Th2 cells; this interaction enhances IRF4 ability to bind to the IL4 promoter and is required for optimal IRF4-dependent IL4 transcription. Interacts with SPI1. Post-translationally, phosphorylation by ROCK2 regulates IL-17 and IL-21 production. As to expression, lymphoid cells.

It is found in the nucleus. The protein resides in the cytoplasm. In terms of biological role, transcriptional activator. Binds to the interferon-stimulated response element (ISRE) of the MHC class I promoter. Binds the immunoglobulin lambda light chain enhancer, together with PU.1. Probably plays a role in ISRE-targeted signal transduction mechanisms specific to lymphoid cells. Involved in CD8(+) dendritic cell differentiation by forming a complex with the BATF-JUNB heterodimer in immune cells, leading to recognition of AICE sequence (5'-TGAnTCA/GAAA-3'), an immune-specific regulatory element, followed by cooperative binding of BATF and IRF4 and activation of genes. The sequence is that of Interferon regulatory factor 4 from Mus musculus (Mouse).